Here is a 511-residue protein sequence, read N- to C-terminus: Putative thymidine phosphorylase 1 (511 aa).

It belongs to the thymidine/pyrimidine-nucleoside phosphorylase family. Type 2 subfamily.

It carries out the reaction thymidine + phosphate = 2-deoxy-alpha-D-ribose 1-phosphate + thymine. The chain is Putative thymidine phosphorylase 1 from Acidovorax sp. (strain JS42).